The following is a 570-amino-acid chain: CRISPR-associated protein Cas8a1/Csx13 (570 aa).

2 disordered regions span residues 1-23 (MACMAPRGPAAIPHPSSERAGLR) and 551-570 (GGEAAELEDADEAAGASEQS).

Belongs to the CRISPR-associated protein Cas8a1/Csx13 family. Myxan subtype subfamily.

CRISPR (clustered regularly interspaced short palindromic repeat) is an adaptive immune system that provides protection against mobile genetic elements (viruses, transposable elements and conjugative plasmids). CRISPR clusters contain spacers, sequences complementary to antecedent mobile elements, and target invading nucleic acids. CRISPR clusters are transcribed and processed into CRISPR RNA (crRNA). Functionally, functions in an unknown fashion to stimulate transcription of fruA independently of the intracellular A- and E-developmental signals. The polypeptide is CRISPR-associated protein Cas8a1/Csx13 (devT) (Myxococcus xanthus (strain DK1622)).